Here is a 701-residue protein sequence, read N- to C-terminus: C6 finger domain transcription factor nscR (701 aa).

Residues 17–43 (CELCRERKVKCDKLDPCTNCSSAGVIC) constitute a DNA-binding region (zn(2)-C6 fungal-type).

The protein localises to the nucleus. In terms of biological role, transcription factor that specifically regulates the neosartoricin B biosynthesis gene cluster. The chain is C6 finger domain transcription factor nscR from Arthroderma benhamiae (strain ATCC MYA-4681 / CBS 112371) (Trichophyton mentagrophytes).